The primary structure comprises 271 residues: Membrane protein insertase YidC 1 (271 aa).

Residues 1–20 form the signal peptide; sequence MKKKLKTFSLILLTGSLLVA. Residue Cys-21 is the site of N-palmitoyl cysteine attachment. A lipid anchor (S-diacylglycerol cysteine) is attached at Cys-21. 4 helical membrane-spanning segments follow: residues 45 to 65, 124 to 144, 163 to 183, and 201 to 221; these read IQWL…TLII, YASV…FQAL, PDPY…STWL, and VMPF…VLYW.

Belongs to the OXA1/ALB3/YidC family. Type 2 subfamily.

The protein localises to the cell membrane. Its function is as follows. Required for the insertion and/or proper folding and/or complex formation of integral membrane proteins into the membrane. Involved in integration of membrane proteins that insert both dependently and independently of the Sec translocase complex, as well as at least some lipoproteins. The sequence is that of Membrane protein insertase YidC 1 from Streptococcus agalactiae serotype III (strain NEM316).